The primary structure comprises 550 residues: Glucose-6-phosphate isomerase 3 (550 aa).

Glu-357 acts as the Proton donor in catalysis. Catalysis depends on residues His-388 and Lys-514.

Belongs to the GPI family.

The protein localises to the cytoplasm. The enzyme catalyses alpha-D-glucose 6-phosphate = beta-D-fructose 6-phosphate. It participates in carbohydrate biosynthesis; gluconeogenesis. The protein operates within carbohydrate degradation; glycolysis; D-glyceraldehyde 3-phosphate and glycerone phosphate from D-glucose: step 2/4. Functionally, catalyzes the reversible isomerization of glucose-6-phosphate to fructose-6-phosphate. The polypeptide is Glucose-6-phosphate isomerase 3 (Rhodococcus jostii (strain RHA1)).